The chain runs to 129 residues: Phenazine antibiotic resistance protein EhpR (129 aa).

Residues 10 to 128 form the VOC domain; the sequence is TPNLQLVYVS…DGHIIRVCPL (119 aa). D-alanylgriseoluteate-binding positions include 42–43 and tryptophan 57; that span reads RY.

In terms of assembly, homodimer.

Functionally, required for resistance to the phenazine antibiotic D-alanylgriseoluteic acid (AGA), an antibiotic produced by E.agglomerans itself, and thus protects the bacterium against phenazine toxicity. Probably binds AGA and acts as a chaperone that works in tandem with a membrane transporter for subsequent antibiotic secretion. The sequence is that of Phenazine antibiotic resistance protein EhpR from Enterobacter agglomerans (Erwinia herbicola).